The following is an 827-amino-acid chain: Translation initiation factor IF-2 (827 aa).

The interval 49 to 205 (ALNREKEEKE…GAPDKKREWE (157 aa)) is disordered. Basic and acidic residues-rich tracts occupy residues 50-73 (LNRE…KAEA), 96-106 (RPREQRSDRPQ), 116-129 (PEPR…RPGE), 137-150 (RPRD…KERG), 157-168 (FGEKKERPPFPR), and 182-205 (EAPK…REWE). One can recognise a tr-type G domain in the interval 326-495 (PRPPIVTVMG…LLVADLKELK (170 aa)). The tract at residues 335-342 (GHVDHGKT) is G1. Residue 335–342 (GHVDHGKT) coordinates GTP. The interval 360-364 (GITQH) is G2. Residues 381–384 (DTPG) form a G3 region. GTP-binding positions include 381 to 385 (DTPGH) and 435 to 438 (NKID). The G4 stretch occupies residues 435-438 (NKID). Residues 471 to 473 (SAL) are G5.

The protein belongs to the TRAFAC class translation factor GTPase superfamily. Classic translation factor GTPase family. IF-2 subfamily.

It is found in the cytoplasm. Its function is as follows. One of the essential components for the initiation of protein synthesis. Protects formylmethionyl-tRNA from spontaneous hydrolysis and promotes its binding to the 30S ribosomal subunits. Also involved in the hydrolysis of GTP during the formation of the 70S ribosomal complex. This Carboxydothermus hydrogenoformans (strain ATCC BAA-161 / DSM 6008 / Z-2901) protein is Translation initiation factor IF-2.